We begin with the raw amino-acid sequence, 40 residues long: Submaxillary gland androgen-regulated protein 2, isoform epsilon (40 aa).

The signal sequence occupies residues 1-20 (MKALYMVFVLWVLIGCFLRC).

It is found in the secreted. In terms of biological role, may play a role in protection or detoxification. This is Submaxillary gland androgen-regulated protein 2, isoform epsilon (Smr2) from Mus musculus (Mouse).